Reading from the N-terminus, the 352-residue chain is Holliday junction branch migration complex subunit RuvB (352 aa).

The segment at 4–185 (ADRLIAATGP…FGIVQRLEFY (182 aa)) is large ATPase domain (RuvB-L). ATP-binding positions include Ile-24, Arg-25, Gly-66, Lys-69, Thr-70, Thr-71, 132–134 (EDF), Arg-175, Tyr-185, and Arg-222. Thr-70 is a Mg(2+) binding site. The interval 186–256 (STADLATIVS…VADLALNLLD (71 aa)) is small ATPAse domain (RuvB-S). The interval 259-352 (EHGFDHQDRR…VDEFLDAVDD (94 aa)) is head domain (RuvB-H). Residues Arg-295, Arg-314, and Arg-319 each coordinate DNA.

The protein belongs to the RuvB family. Homohexamer. Forms an RuvA(8)-RuvB(12)-Holliday junction (HJ) complex. HJ DNA is sandwiched between 2 RuvA tetramers; dsDNA enters through RuvA and exits via RuvB. An RuvB hexamer assembles on each DNA strand where it exits the tetramer. Each RuvB hexamer is contacted by two RuvA subunits (via domain III) on 2 adjacent RuvB subunits; this complex drives branch migration. In the full resolvosome a probable DNA-RuvA(4)-RuvB(12)-RuvC(2) complex forms which resolves the HJ.

It localises to the cytoplasm. The enzyme catalyses ATP + H2O = ADP + phosphate + H(+). In terms of biological role, the RuvA-RuvB-RuvC complex processes Holliday junction (HJ) DNA during genetic recombination and DNA repair, while the RuvA-RuvB complex plays an important role in the rescue of blocked DNA replication forks via replication fork reversal (RFR). RuvA specifically binds to HJ cruciform DNA, conferring on it an open structure. The RuvB hexamer acts as an ATP-dependent pump, pulling dsDNA into and through the RuvAB complex. RuvB forms 2 homohexamers on either side of HJ DNA bound by 1 or 2 RuvA tetramers; 4 subunits per hexamer contact DNA at a time. Coordinated motions by a converter formed by DNA-disengaged RuvB subunits stimulates ATP hydrolysis and nucleotide exchange. Immobilization of the converter enables RuvB to convert the ATP-contained energy into a lever motion, pulling 2 nucleotides of DNA out of the RuvA tetramer per ATP hydrolyzed, thus driving DNA branch migration. The RuvB motors rotate together with the DNA substrate, which together with the progressing nucleotide cycle form the mechanistic basis for DNA recombination by continuous HJ branch migration. Branch migration allows RuvC to scan DNA until it finds its consensus sequence, where it cleaves and resolves cruciform DNA. In Pseudomonas fluorescens (strain SBW25), this protein is Holliday junction branch migration complex subunit RuvB.